A 418-amino-acid polypeptide reads, in one-letter code: UDP-N-acetylglucosamine 1-carboxyvinyltransferase (418 aa).

23-24 lines the phosphoenolpyruvate pocket; the sequence is KN. Arg-92 provides a ligand contact to UDP-N-acetyl-alpha-D-glucosamine. Cys-116 (proton donor) is an active-site residue. At Cys-116 the chain carries 2-(S-cysteinyl)pyruvic acid O-phosphothioketal. UDP-N-acetyl-alpha-D-glucosamine is bound by residues 121–125, 161–164, Asp-306, and Ile-328; these read RPVDL and KVSV.

This sequence belongs to the EPSP synthase family. MurA subfamily.

Its subcellular location is the cytoplasm. It carries out the reaction phosphoenolpyruvate + UDP-N-acetyl-alpha-D-glucosamine = UDP-N-acetyl-3-O-(1-carboxyvinyl)-alpha-D-glucosamine + phosphate. Its pathway is cell wall biogenesis; peptidoglycan biosynthesis. In terms of biological role, cell wall formation. Adds enolpyruvyl to UDP-N-acetylglucosamine. The protein is UDP-N-acetylglucosamine 1-carboxyvinyltransferase of Vibrio parahaemolyticus serotype O3:K6 (strain RIMD 2210633).